Here is a 668-residue protein sequence, read N- to C-terminus: MIDRQTDRAFDLVSKYQPTGDQPEAINQLTHGIEAGEKAQILLGATGTGKTFTISNVIKNVNKPTLVLSHNKTLAGQLYGEFKQFFPNNAVEYFVSYYDYYQPEAYVPSSDTYIEKDSSINDEIDKLRHSATSSLLERNDVIVVASVSSIFGLGDPTEYKNHVVSLRVGQEIERDALLRKLVNIQFERNDYDFQRGRFRVHGDVVEIFPASRDERALRVEFFGDEIDRIREVDALTGEIVGDREHVAIFPATHFMTNDDIMAQATAGIEGELKERLAELENDGKLLEAQRLKQRTTYDLEMMREMGYTSGIENYSRWMDGRQAGEPPYTLLDFFPKDFLLVVDESHVTMPQVRGMYNGDRARKQQLVDYGFRLPSALDNRPLKLNEVEQHINQVIYMSATPGPYEAEQTDHVVQQIIRPTGLLDPTIDVRPIMGQMDDLVGEINQRIEKNERTFVTTLTKKMAEDLTDYLKDLGIKVAYLHSDIKTLERTEIMRDLRLGKYDVLVGINLLREGIDIPEVSLVAILDADKEGFLRNERSLIQTIGRAARNSHGSVIMYADSVTDSMQAAMDETARRRQIQIAYNKEHGITPTTIIKPIRDLIAVSKKNDNAGEKDDFVASDFEDMTKEDQEKLIARLEDEMRAAAKKLDFEQAASLRDTIMDMKTEIGD.

The Helicase ATP-binding domain maps to 31 to 188 (HGIEAGEKAQ…RKLVNIQFER (158 aa)). 44 to 51 (GATGTGKT) lines the ATP pocket. The Beta-hairpin motif lies at 97–120 (YYDYYQPEAYVPSSDTYIEKDSSI). The Helicase C-terminal domain maps to 435–601 (QMDDLVGEIN…TIIKPIRDLI (167 aa)). Residues 630–665 (EKLIARLEDEMRAAAKKLDFEQAASLRDTIMDMKTE) enclose the UVR domain.

The protein belongs to the UvrB family. Forms a heterotetramer with UvrA during the search for lesions. Interacts with UvrC in an incision complex.

Its subcellular location is the cytoplasm. Its function is as follows. The UvrABC repair system catalyzes the recognition and processing of DNA lesions. A damage recognition complex composed of 2 UvrA and 2 UvrB subunits scans DNA for abnormalities. Upon binding of the UvrA(2)B(2) complex to a putative damaged site, the DNA wraps around one UvrB monomer. DNA wrap is dependent on ATP binding by UvrB and probably causes local melting of the DNA helix, facilitating insertion of UvrB beta-hairpin between the DNA strands. Then UvrB probes one DNA strand for the presence of a lesion. If a lesion is found the UvrA subunits dissociate and the UvrB-DNA preincision complex is formed. This complex is subsequently bound by UvrC and the second UvrB is released. If no lesion is found, the DNA wraps around the other UvrB subunit that will check the other stand for damage. The chain is UvrABC system protein B from Levilactobacillus brevis (strain ATCC 367 / BCRC 12310 / CIP 105137 / JCM 1170 / LMG 11437 / NCIMB 947 / NCTC 947) (Lactobacillus brevis).